We begin with the raw amino-acid sequence, 100 residues long: Putative PIN1-like protein (100 aa).

Residues 1 to 15 (MADEEKLPPGWEKRM) show a composition bias toward basic and acidic residues. Disordered stretches follow at residues 1–52 (MADE…QGEP) and 69–100 (LDLA…REGL). Positions 5–38 (EKLPPGWEKRMSRPSGRGYYFNHITNPSQWERPS) constitute a WW domain. A compositionally biased stretch (polar residues) spans 27 to 44 (HITNPSQWERPSGNSSSG). Positions 87-100 (QRLHPEDQGRREGL) are enriched in basic and acidic residues.

The polypeptide is Putative PIN1-like protein (PIN1P1) (Homo sapiens (Human)).